The chain runs to 396 residues: Subtelomeric hrmA-associated cluster protein AFUB_079040 (396 aa).

2 disordered regions span residues methionine 1–leucine 32 and tyrosine 347–arginine 396. Positions serine 23–leucine 32 are enriched in polar residues. The segment covering serine 367–lysine 380 has biased composition (basic residues).

Functionally, part of the subtelomeric hrmA-associated cluster (HAC) containing genes that alter the hyphal surface (such as reduced total chitin or increased beta-glucan exposure) and perturb inter-hyphal interactions within the developing biofilms, resulting in a loss of vertically aligned polarized growing filaments. Consequently, this hypoxia-typic morphotype (called H-MORPH) with altered biofilm architecture leads to increased hypoxia fitness, increased host inflammation, rapid disease progression, and mortality in a murine model of invasive aspergillosis. The polypeptide is Subtelomeric hrmA-associated cluster protein AFUB_079040 (Aspergillus fumigatus (strain CBS 144.89 / FGSC A1163 / CEA10) (Neosartorya fumigata)).